A 313-amino-acid chain; its full sequence is Ribonuclease HIII (313 aa).

Positions 94–310 (MSVIGSDEVG…TQKAKRLVER (217 aa)) constitute an RNase H type-2 domain. Residues D100, E101, and D205 each contribute to the a divalent metal cation site.

This sequence belongs to the RNase HII family. RnhC subfamily. Mn(2+) is required as a cofactor. It depends on Mg(2+) as a cofactor.

It is found in the cytoplasm. The catalysed reaction is Endonucleolytic cleavage to 5'-phosphomonoester.. Functionally, endonuclease that specifically degrades the RNA of RNA-DNA hybrids. The polypeptide is Ribonuclease HIII (Bacillus velezensis (strain DSM 23117 / BGSC 10A6 / LMG 26770 / FZB42) (Bacillus amyloliquefaciens subsp. plantarum)).